The sequence spans 188 residues: PRA1 family protein F3 (188 aa).

Transmembrane regions (helical) follow at residues 74–94 (IVVL…LIVF), 95–115 (TVLV…IKLF), 123–143 (TVLI…NATF), and 145–165 (IVGA…VRKT).

This sequence belongs to the PRA1 family. As to quaternary structure, interacts with PRA1F2 and PRA1D. Interacts with ACD11 and BPA1. In terms of tissue distribution, expressed in lateral roots, lateral root caps and columella cells.

It localises to the endoplasmic reticulum membrane. The protein resides in the membrane. The protein localises to the cytoplasm. In terms of biological role, may be involved in both secretory and endocytic intracellular trafficking in the endosomal/prevacuolar compartments. In Arabidopsis thaliana (Mouse-ear cress), this protein is PRA1 family protein F3.